Reading from the N-terminus, the 613-residue chain is Xaa-Pro aminopeptidase ApepP (613 aa).

Substrate-binding residues include Arg-77 and His-388. Asp-408, Asp-419, and His-482 together coordinate Mn(2+). Positions 482, 491, and 517 each coordinate substrate. Mn(2+) is bound by residues Glu-517 and Glu-531.

The protein belongs to the peptidase M24B family. The cofactor is Mn(2+). Detected in gut, brain, testes and ovary.

The protein resides in the cytoplasm. The enzyme catalyses Release of any N-terminal amino acid, including proline, that is linked to proline, even from a dipeptide or tripeptide.. Its activity is regulated as follows. Inhibited by the chelating agent EDTA. Divalent metal ions have substrate- and concentration-dependent effects on activity. Activity towards bradykinin is inhibited with increasing Mn(2+) concentration. Activity towards substance P is stimulated by low Mn(2+) concentrations (in the range 10 uM-1 mM) but inhibited by Mn(2+) concentrations in excess of 1 mM. Ca(2+), Mg(2+) and Co(2+) stimulate activity towards substance P at concentrations of 10-100 uM but are inhibitory at concentrations of 1 mM. Zn(2+), Ni(2+) and Cu(2+) strongly inhibit activity towards substance P at concentrations of 1 mM. Its function is as follows. Catalyzes the removal of a penultimate prolyl residue from the N-termini of peptides, such as Arg-Pro-Pro. This Drosophila melanogaster (Fruit fly) protein is Xaa-Pro aminopeptidase ApepP.